The primary structure comprises 682 residues: Polycomb protein suz12-B (682 aa).

A disordered region spans residues 326–355 (DPSDPSTAPVAKPLSTRNSDTSTTESRIST). The segment covering 340–354 (STRNSDTSTTESRIS) has biased composition (polar residues). Residues 408–431 (LHCPWCTLNCRKLYSLLKHLKLSH) form a C2H2-type zinc finger. Positions 523–599 (RLYFHSDSCM…NQMSQASMLF (77 aa)) are VEFS-box.

Belongs to the VEFS (VRN2-EMF2-FIS2-SU(Z)12) family. As to quaternary structure, component of the prc2/eed-ezh2 complex.

Its subcellular location is the nucleus. Its function is as follows. Polycomb group (PcG) protein. Component of the prc2/eed-ezh2 complex, which methylates 'Lys-9' and 'Lys-27' of histone H3, leading to transcriptional repression of the affected target gene. This Danio rerio (Zebrafish) protein is Polycomb protein suz12-B (suz12b).